The primary structure comprises 284 residues: 2-dehydro-3-deoxyphosphooctonate aldolase (284 aa).

It belongs to the KdsA family.

It is found in the cytoplasm. It catalyses the reaction D-arabinose 5-phosphate + phosphoenolpyruvate + H2O = 3-deoxy-alpha-D-manno-2-octulosonate-8-phosphate + phosphate. It functions in the pathway carbohydrate biosynthesis; 3-deoxy-D-manno-octulosonate biosynthesis; 3-deoxy-D-manno-octulosonate from D-ribulose 5-phosphate: step 2/3. Its pathway is bacterial outer membrane biogenesis; lipopolysaccharide biosynthesis. The sequence is that of 2-dehydro-3-deoxyphosphooctonate aldolase from Burkholderia cenocepacia (strain ATCC BAA-245 / DSM 16553 / LMG 16656 / NCTC 13227 / J2315 / CF5610) (Burkholderia cepacia (strain J2315)).